Reading from the N-terminus, the 1036-residue chain is MTSIKQILARHDWENPVVTNWNRLPLHTSMSYANERNKREIKQPRKSLNGPWQFSYFENLSDIDEEWRKKDLPTSKIIHVPSNWQLQGDYDVPVYTNVTYPFPVNPPYVPTENPVGAYSKKVFLDNKWLADNTESHVVFNGVGSAFYLWVNGEWVGYSEDSRLPAEFDITEELRAGENRIAVLVLKWSKGSYFEDQDMWRMSGIFRDVDLIRVPKTRFQDLAIETKLDEDLDDATVEVRAQLVGNSADNLSVTAELFYHGMSLFKATEQFGNRVIDERGTNDGQVSLELPVKNPALWSAEVPNLYDIKVSLHDGEENYQIENKKVGIRKVQIKDGLLTLNNQPLLIRGVNKHEFNSKTGYYVDEKTMIDDIRMMKEHNFNAVRLSHYPNASRWYELCDQYGLYLVDEANIETHGVKPMNYLTNDPKYLPLMMERVTRMVQRDYNHPSIIIWSLGNESGYGHNHDAMYQWIKNTDPSRPIQYEGGGADTPATDIIAPMYARVDQDQVEEVNSKWAIKKWIGLSKENRPLILCEYAHSMGNSLGGFNKYWEAFEKYPRLQGGFIWDWVDQGLLTKNNEGQSYYAYGGDFGDYPNDRQFSLDGLLFPDRTPKPALLEAKYCQQYFAFQLEKDPTGKVNYMTVSNKHLFKTVNDATLIYQILSNDQVIETKKIKLNLAPQTEERVSLNFSDNSNEDVYMNCQIVQDSTDGLIRSGTLLAYKQFILRNKPIMISDVRSSDDYEDFLINDATDSLSISLDDAIWQFNKRTGWLSNWIKNGQEKVLTPLKDQFSRAALDNDIGVSEVTNIDPNAWFERWQATGFNHLNEKLVQFNWTALKDEVRITTQHQFLSPIDQHIMFISSKEYRINHVGDLKVYVDVWRQVADPQPARIGLSVQINATTDAVTYSGLGPMENYPDRRSAAIRGKWDASLKELYTPYVFPSENGLRTEVAYLKFDHHVIRALEQRFSFNLSQFSQAQLSAVTHQHLLKPEEGVWLNIDGYHMGVGGDDSWSPSVSPEFLLSNDHYHYSFSWSNAEGEANV.

Substrate is bound by residues Asn97 and Asp197. Asp197 is a Na(+) binding site. Positions 411, 413, and 456 each coordinate Mg(2+). Substrate is bound by residues Glu456 and 532-535; that span reads EYAH. Glu456 (proton donor) is an active-site residue. Catalysis depends on Glu532, which acts as the Nucleophile. Asn592 contributes to the Mg(2+) binding site. 2 residues coordinate Na(+): Phe596 and Asp599. Residues Asp599 and Trp1006 each coordinate substrate.

This sequence belongs to the glycosyl hydrolase 2 family. As to quaternary structure, homotetramer. Requires Mg(2+) as cofactor. Na(+) serves as cofactor.

It carries out the reaction Hydrolysis of terminal non-reducing beta-D-galactose residues in beta-D-galactosides.. In Leuconostoc mesenteroides subsp. mesenteroides (strain ATCC 8293 / DSM 20343 / BCRC 11652 / CCM 1803 / JCM 6124 / NCDO 523 / NBRC 100496 / NCIMB 8023 / NCTC 12954 / NRRL B-1118 / 37Y), this protein is Beta-galactosidase.